Consider the following 342-residue polypeptide: MSQSPAAHVPVLYTQVLDGLQVTENGTYLDGTFGRGGHARGVLEHLGPGGRLLVMDKDPEAIAVAEHSFGGDARVSIHRGSFAGLGQVVAAATVDGILLDLGVSSPQLDVAGRGFSFGKDGPLDMRMDPDSGQSAAEWLAQASDREIADVLWTYGEERQSRRIARAIVARRAEQPLLRTAQLADLIASVMPRGDSKTHPATRSFQAIRIHINRELADLEAGLDAALGALKPGGRLAVISFHSLEDRIVKQFMARYAKAPPSNRRLPEAQPFVATLQLVSGAIKADDAELHVNPRARSAVLRVAEKLGLGNGESGMGKGNSAAASRFPTADSPFPASANGDAA.

Residues 36 to 38, D56, F82, D100, and Q107 contribute to the S-adenosyl-L-methionine site; that span reads GGH. Residues 311 to 342 are disordered; the sequence is GESGMGKGNSAAASRFPTADSPFPASANGDAA.

Belongs to the methyltransferase superfamily. RsmH family.

It localises to the cytoplasm. The enzyme catalyses cytidine(1402) in 16S rRNA + S-adenosyl-L-methionine = N(4)-methylcytidine(1402) in 16S rRNA + S-adenosyl-L-homocysteine + H(+). In terms of biological role, specifically methylates the N4 position of cytidine in position 1402 (C1402) of 16S rRNA. The sequence is that of Ribosomal RNA small subunit methyltransferase H from Xanthomonas axonopodis pv. citri (strain 306).